The following is a 156-amino-acid chain: Transcription antitermination protein NusB (156 aa).

This sequence belongs to the NusB family.

In terms of biological role, involved in transcription antitermination. Required for transcription of ribosomal RNA (rRNA) genes. Binds specifically to the boxA antiterminator sequence of the ribosomal RNA (rrn) operons. The chain is Transcription antitermination protein NusB from Vibrio cholerae serotype O1 (strain ATCC 39541 / Classical Ogawa 395 / O395).